Reading from the N-terminus, the 351-residue chain is Photosystem II D2 protein (351 aa).

A helical transmembrane segment spans residues 39-59 (CAFLALGGWLTGTTFVTSWYT). Chlorophyll a is bound at residue His-116. The chain crosses the membrane as a helical span at residues 123 to 139 (GFMLRQFEIARLVGIRP). 2 residues coordinate pheophytin a: Gln-128 and Asn-141. The helical transmembrane segment at 151–164 (VFVSVFLMYPLGQS) threads the bilayer. His-196 serves as a coordination point for chlorophyll a. A helical transmembrane segment spans residues 206–226 (GALLCAIHGATVENTLFEDGD). 2 residues coordinate a plastoquinone: His-213 and Phe-260. Residue His-213 participates in Fe cation binding. His-267 lines the Fe cation pocket. Residues 277 to 293 (GLWMSAVGIVGLALNLR) form a helical membrane-spanning segment.

The protein belongs to the reaction center PufL/M/PsbA/D family. As to quaternary structure, PSII is composed of 1 copy each of membrane proteins PsbA, PsbB, PsbC, PsbD, PsbE, PsbF, PsbH, PsbI, PsbJ, PsbK, PsbL, PsbM, PsbT, PsbX, PsbY, PsbZ, Psb30/Ycf12, peripheral proteins PsbO, CyanoQ (PsbQ), PsbU, PsbV and a large number of cofactors. It forms dimeric complexes. The cofactor is The D1/D2 heterodimer binds P680, chlorophylls that are the primary electron donor of PSII, and subsequent electron acceptors. It shares a non-heme iron and each subunit binds pheophytin, quinone, additional chlorophylls, carotenoids and lipids. There is also a Cl(-1) ion associated with D1 and D2, which is required for oxygen evolution. The PSII complex binds additional chlorophylls, carotenoids and specific lipids..

Its subcellular location is the cellular thylakoid membrane. The enzyme catalyses 2 a plastoquinone + 4 hnu + 2 H2O = 2 a plastoquinol + O2. Functionally, photosystem II (PSII) is a light-driven water:plastoquinone oxidoreductase that uses light energy to abstract electrons from H(2)O, generating O(2) and a proton gradient subsequently used for ATP formation. It consists of a core antenna complex that captures photons, and an electron transfer chain that converts photonic excitation into a charge separation. The D1/D2 (PsbA/PsbD) reaction center heterodimer binds P680, the primary electron donor of PSII as well as several subsequent electron acceptors. D2 is needed for assembly of a stable PSII complex. In Nostoc punctiforme (strain ATCC 29133 / PCC 73102), this protein is Photosystem II D2 protein.